Here is a 245-residue protein sequence, read N- to C-terminus: Polyhedrin (245 aa).

It belongs to the polyhedrin family.

In terms of biological role, major component of the virus occlusion bodies, which are large proteinaceous structures (polyhedra), that protect the virus from the outside environment for extended periods until they are ingested by insect larvae. The polypeptide is Polyhedrin (Lepidoptera (butterflies and moths)).